Reading from the N-terminus, the 194-residue chain is Peptidyl-tRNA hydrolase (194 aa).

A tRNA-binding site is contributed by Tyr17. His22 acts as the Proton acceptor in catalysis. The tRNA site is built by Phe68, Asn70, and Asn116.

The protein belongs to the PTH family. In terms of assembly, monomer.

The protein localises to the cytoplasm. The catalysed reaction is an N-acyl-L-alpha-aminoacyl-tRNA + H2O = an N-acyl-L-amino acid + a tRNA + H(+). Hydrolyzes ribosome-free peptidyl-tRNAs (with 1 or more amino acids incorporated), which drop off the ribosome during protein synthesis, or as a result of ribosome stalling. In terms of biological role, catalyzes the release of premature peptidyl moieties from peptidyl-tRNA molecules trapped in stalled 50S ribosomal subunits, and thus maintains levels of free tRNAs and 50S ribosomes. This chain is Peptidyl-tRNA hydrolase, found in Proteus mirabilis (strain HI4320).